The following is a 269-amino-acid chain: Adenosylcobinamide-GDP ribazoletransferase (269 aa).

5 consecutive transmembrane segments (helical) span residues Q8 to I28, Y41 to L61, V70 to A90, I114 to L136, and V196 to V216.

This sequence belongs to the CobS family. Mg(2+) is required as a cofactor.

It localises to the cell inner membrane. It carries out the reaction alpha-ribazole + adenosylcob(III)inamide-GDP = adenosylcob(III)alamin + GMP + H(+). The enzyme catalyses alpha-ribazole 5'-phosphate + adenosylcob(III)inamide-GDP = adenosylcob(III)alamin 5'-phosphate + GMP + H(+). The protein operates within cofactor biosynthesis; adenosylcobalamin biosynthesis; adenosylcobalamin from cob(II)yrinate a,c-diamide: step 7/7. Joins adenosylcobinamide-GDP and alpha-ribazole to generate adenosylcobalamin (Ado-cobalamin). Also synthesizes adenosylcobalamin 5'-phosphate from adenosylcobinamide-GDP and alpha-ribazole 5'-phosphate. This is Adenosylcobinamide-GDP ribazoletransferase from Pseudoalteromonas atlantica (strain T6c / ATCC BAA-1087).